The chain runs to 424 residues: UPF0761 membrane protein Smal_0716 (424 aa).

6 helical membrane passes run 48-68, 101-121, 144-164, 181-201, 216-236, and 251-271; these read VFAL…FPVF, SAGQ…LITL, FLVY…SLAV, WLAD…CITL, AVPG…GIGA, and VAFV…VLLG.

The protein belongs to the UPF0761 family.

It localises to the cell inner membrane. The sequence is that of UPF0761 membrane protein Smal_0716 from Stenotrophomonas maltophilia (strain R551-3).